Here is a 183-residue protein sequence, read N- to C-terminus: MKKVTDSFVSLGHWPSAGSFGFNTDILATNPINLSVVLGVLIFFGKGVLSDLLDNRKQRILSTIRNSEELRGGAIEKLEKAKARLRKVKAEADEFRTNGYSEIEREKCNLINSTYQNLERLENYKNETIQFEQQRAINQVRQRIFQQALQGALGTLNSCLNNELHLRTISANIGMFGAMKEIT.

A helical transmembrane segment spans residues 27–49 (LATNPINLSVVLGVLIFFGKGVL).

The protein belongs to the ATPase B chain family. As to quaternary structure, F-type ATPases have 2 components, F(1) - the catalytic core - and F(0) - the membrane proton channel. F(1) has five subunits: alpha(3), beta(3), gamma(1), delta(1), epsilon(1). F(0) has four main subunits: a(1), b(1), b'(1) and c(10-14). The alpha and beta chains form an alternating ring which encloses part of the gamma chain. F(1) is attached to F(0) by a central stalk formed by the gamma and epsilon chains, while a peripheral stalk is formed by the delta, b and b' chains.

It is found in the plastid. It localises to the chloroplast thylakoid membrane. In terms of biological role, f(1)F(0) ATP synthase produces ATP from ADP in the presence of a proton or sodium gradient. F-type ATPases consist of two structural domains, F(1) containing the extramembraneous catalytic core and F(0) containing the membrane proton channel, linked together by a central stalk and a peripheral stalk. During catalysis, ATP synthesis in the catalytic domain of F(1) is coupled via a rotary mechanism of the central stalk subunits to proton translocation. Its function is as follows. Component of the F(0) channel, it forms part of the peripheral stalk, linking F(1) to F(0). The sequence is that of ATP synthase subunit b, chloroplastic from Ranunculus macranthus (Large buttercup).